The primary structure comprises 403 residues: 26S proteasome regulatory subunit 6B homolog (403 aa).

M1 bears the N-acetylmethionine mark. ATP is bound at residue 191–198 (GPPGTGKT).

The protein belongs to the AAA ATPase family.

The protein resides in the cytoplasm. It is found in the nucleus. In terms of biological role, the 26S proteasome is involved in the ATP-dependent degradation of ubiquitinated proteins. The regulatory (or ATPase) complex confers ATP dependency and substrate specificity to the 26S complex. In Dictyostelium discoideum (Social amoeba), this protein is 26S proteasome regulatory subunit 6B homolog (psmC4).